The sequence spans 149 residues: uncharacterized protein (149 aa).

This is an uncharacterized protein from Mycoplasma pneumoniae (strain ATCC 29342 / M129 / Subtype 1) (Mycoplasmoides pneumoniae).